A 135-amino-acid polypeptide reads, in one-letter code: Small ribosomal subunit protein uS8 (135 aa).

Belongs to the universal ribosomal protein uS8 family. As to quaternary structure, part of the 30S ribosomal subunit. Contacts proteins S5 and S12.

One of the primary rRNA binding proteins, it binds directly to 16S rRNA central domain where it helps coordinate assembly of the platform of the 30S subunit. The sequence is that of Small ribosomal subunit protein uS8 from Cutibacterium acnes (strain DSM 16379 / KPA171202) (Propionibacterium acnes).